Reading from the N-terminus, the 271-residue chain is Short-chain type dehydrogenase/reductase (271 aa).

25 to 49 lines the NAD(+) pocket; sequence IVTGASRGIGREIALNMAEKGAKVV. S166 lines the substrate pocket. The active-site Proton acceptor is Y179.

Belongs to the short-chain dehydrogenases/reductases (SDR) family.

This Picea abies (Norway spruce) protein is Short-chain type dehydrogenase/reductase.